Reading from the N-terminus, the 162-residue chain is UPF0114 protein Sfri_3655 (162 aa).

A run of 3 helical transmembrane segments spans residues 15–35, 53–73, and 136–156; these read IMAPIYLGLSLILFALGIKFF, LVLITLSLIDITLVGGLLIMV, and IMWYLLIHITFVLSAFAMGYL.

It belongs to the UPF0114 family.

It is found in the cell membrane. The sequence is that of UPF0114 protein Sfri_3655 from Shewanella frigidimarina (strain NCIMB 400).